Reading from the N-terminus, the 795-residue chain is uncharacterized protein (795 aa).

A coiled-coil region spans residues 228 to 280; that stretch reads NIICFKNKCKNNEKEKKEEEEDHDHDHDDKKKEKEDKEKEEEEEEEDSNDDFE. 4 disordered regions span residues 242 to 278, 326 to 430, 455 to 484, and 673 to 743; these read EKKE…SNDD, TTTT…TPNR, INQQ…KSEP, and NNNN…NENE. Positions 251–264 are enriched in basic and acidic residues; sequence DHDHDDKKKEKEDK. Residues 265-278 show a composition bias toward acidic residues; it reads EKEEEEEEEDSNDD. A compositionally biased stretch (low complexity) spans 326 to 345; that stretch reads TTTTTVNGSKNSSNTTTPIT. The span at 362-373 shows a compositional bias: acidic residues; it reads DDDDDDDLTDED. Over residues 377–398 the composition is skewed to polar residues; it reads HNEIYSTSPKVSHSTFCQSSPT. 3 stretches are compositionally biased toward low complexity: residues 399-414, 455-480, and 673-729; these read LLDL…QQQQ, INQQ…SSNI, and NNNN…NQNE. A compositionally biased stretch (basic and acidic residues) spans 732–743; that stretch reads NENKNENENENE.

This is an uncharacterized protein from Dictyostelium discoideum (Social amoeba).